A 904-amino-acid polypeptide reads, in one-letter code: Patched domain-containing protein 4 (904 aa).

Residues 41–61 (HPVFFLTVPAVLTITFGLSAL) form a helical membrane-spanning segment. N-linked (GlcNAc...) asparagine glycosylation occurs at Asn-149. An SSD domain is found at 291–450 (TRSKVLVSLV…FSFFGSCLVF (160 aa)). 6 consecutive transmembrane segments (helical) span residues 295–312 (VLVS…SSSM), 323–343 (GLLG…IFFI), 351–371 (TLLG…FELL), 394–414 (VMVT…MGAS), 431–451 (VSIL…LVFA), and 523–543 (PFVV…CLQI). Asn-625 carries N-linked (GlcNAc...) asparagine glycosylation. 3 helical membrane-spanning segments follow: residues 718–738 (PVLI…FLVI), 744–764 (FWLI…MTLW), and 771–791 (ISIL…APLL). Asn-820 carries an N-linked (GlcNAc...) asparagine glycan. Transmembrane regions (helical) follow at residues 823 to 843 (SFLI…FTLF) and 845 to 865 (CLLL…PVFL).

This sequence belongs to the patched family.

The protein resides in the membrane. Functionally, could act as a repressor of canonical hedgehog signaling by antagonizing the effects of SMO, as suggested by down-regulation of hedgehog target genes, including GLI1, PTCH1, and PTCH2 in PTCHD4-expressing cells. This is Patched domain-containing protein 4 (Ptchd4) from Mus musculus (Mouse).